A 369-amino-acid chain; its full sequence is MRSPLLAPSEKCQAWPRFTPPWYLSSGLAMTLYTAFVANQRCLNSARTREPEYISQVMTGSQGVPLHVWRSPIPSQAKGTLIATYGITGSLEDQGFLRQWGRWAYERHYDVILFDWRAHGKTAELSPTLTSDGLYEGEDFVYLAAQAKALGYPGPFWFGGYSLGGQLSLWGVYKGQTLADWGNNDAMLTSFSPTDIGGAMAICPSLDSQRSLNYLTSHPVGRYLEKAIANKLKELAWQLHRHHPGEFDSQAIERANTIWGFDHNLVIDRLGLASVEDYYEVSSALPLLSKIVKPTLLLYAADDPMFHPAIVEELPGLQNQLTGVDLQITPKGGHVGYIANGPCQQASNDPDENWAIHRTLDWLDQKSLA.

Active-site charge relay system residues include S162, D303, and H334.

The protein belongs to the AB hydrolase superfamily. AB hydrolase 4 family.

This Synechocystis sp. (strain ATCC 27184 / PCC 6803 / Kazusa) protein is Putative esterase slr0264.